We begin with the raw amino-acid sequence, 380 residues long: tRNA(Met) cytidine acetate ligase (380 aa).

ATP-binding positions include 7-20 (IAEY…HLYQ), Gly-101, Asn-151, and Arg-176.

The protein belongs to the TmcAL family.

It is found in the cytoplasm. It carries out the reaction cytidine(34) in elongator tRNA(Met) + acetate + ATP = N(4)-acetylcytidine(34) in elongator tRNA(Met) + AMP + diphosphate. In terms of biological role, catalyzes the formation of N(4)-acetylcytidine (ac(4)C) at the wobble position of elongator tRNA(Met), using acetate and ATP as substrates. First activates an acetate ion to form acetyladenylate (Ac-AMP) and then transfers the acetyl group to tRNA to form ac(4)C34. This is tRNA(Met) cytidine acetate ligase from Ligilactobacillus salivarius (strain UCC118) (Lactobacillus salivarius).